We begin with the raw amino-acid sequence, 84 residues long: Small ribosomal subunit protein bS16 (84 aa).

It belongs to the bacterial ribosomal protein bS16 family.

The chain is Small ribosomal subunit protein bS16 from Endomicrobium trichonymphae.